The primary structure comprises 167 residues: NAD(P)H-quinone oxidoreductase subunit I, chloroplastic (167 aa).

4Fe-4S ferredoxin-type domains lie at Gly55–Lys84 and Leu95–Glu124. [4Fe-4S] cluster contacts are provided by Cys64, Cys67, Cys70, Cys74, Cys104, Cys107, Cys110, and Cys114.

The protein belongs to the complex I 23 kDa subunit family. In terms of assembly, NDH is composed of at least 16 different subunits, 5 of which are encoded in the nucleus. [4Fe-4S] cluster serves as cofactor.

The protein localises to the plastid. Its subcellular location is the chloroplast thylakoid membrane. The catalysed reaction is a plastoquinone + NADH + (n+1) H(+)(in) = a plastoquinol + NAD(+) + n H(+)(out). It catalyses the reaction a plastoquinone + NADPH + (n+1) H(+)(in) = a plastoquinol + NADP(+) + n H(+)(out). Functionally, NDH shuttles electrons from NAD(P)H:plastoquinone, via FMN and iron-sulfur (Fe-S) centers, to quinones in the photosynthetic chain and possibly in a chloroplast respiratory chain. The immediate electron acceptor for the enzyme in this species is believed to be plastoquinone. Couples the redox reaction to proton translocation, and thus conserves the redox energy in a proton gradient. The polypeptide is NAD(P)H-quinone oxidoreductase subunit I, chloroplastic (Jasminum nudiflorum (Winter jasmine)).